Reading from the N-terminus, the 107-residue chain is uncharacterized protein (107 aa).

The segment at 1 to 32 (MDSLASGRWRRRRTEELPAAGDAKRACRRSEP) is disordered. Residues 22 to 31 (DAKRACRRSE) are compositionally biased toward basic and acidic residues.

This is an uncharacterized protein from Mus musculus (Mouse).